A 602-amino-acid chain; its full sequence is MAALAAAAKKVWSARRLLVLLFTPLALLPVVFALPPKEGRCLFVILLMAVYWCTEALPLSVTALLPIVLFPFMGILPSNKVCPQYFLDTNFLFLSGLIMASAIEEWNLHRRIALKILMLVGVQPARLILGMMVTTSFLSMWLSNTASTAMMLPIANAILKSLFGQKEVRKDPSQESEENTAAVRRNGLHTVPTEMQFLASTEAKDHPGETEVPLDLPADSRKEDEYRRNIWKGFLISIPYSASIGGTATLTGTAPNLILLGQLKSFFPQCDVVNFGSWFIFAFPLMLLFLLAGWLWISFLYGGLSFRGWRKNKSEIRTNAEDRARAVIREEYQNLGPIKFAEQAVFILFCMFAILLFTRDPKFIPGWASLFNPGFLSDAVTGVAIVTILFFFPSQRPSLKWWFDFKAPNTETEPLLTWKKAQETVPWNIILLLGGGFAMAKGCEESGLSVWIGGQLHPLENVPPALAVLLITVVIAFFTEFASNTATIIIFLPVLAELAIRLRVHPLYLMIPGTVGCSFAFMLPVSTPPNSIAFASGHLLVKDMVRTGLLMNLMGVLLLSLAMNTWAQTIFQLGTFPDWADMYSVNVTALPPTLANDTFRTL.

Residues 1–16 (MAALAAAAKKVWSARR) are Cytoplasmic-facing. Residues 17–37 (LLVLLFTPLALLPVVFALPPK) form a helical membrane-spanning segment. The Extracellular segment spans residues 38 to 55 (EGRCLFVILLMAVYWCTE). A helical membrane pass occupies residues 56–76 (ALPLSVTALLPIVLFPFMGIL). Topologically, residues 77-82 (PSNKVC) are cytoplasmic. Residues 83–103 (PQYFLDTNFLFLSGLIMASAI) traverse the membrane as a helical segment. At 104–137 (EEWNLHRRIALKILMLVGVQPARLILGMMVTTSF) the chain is on the extracellular side. The chain crosses the membrane as a helical span at residues 138–158 (LSMWLSNTASTAMMLPIANAI). The Cytoplasmic portion of the chain corresponds to 159–229 (LKSLFGQKEV…SRKEDEYRRN (71 aa)). The helical transmembrane segment at 230–250 (IWKGFLISIPYSASIGGTATL) threads the bilayer. Over 251–278 (TGTAPNLILLGQLKSFFPQCDVVNFGSW) the chain is Extracellular. Residues 279 to 299 (FIFAFPLMLLFLLAGWLWISF) form a helical membrane-spanning segment. The Cytoplasmic segment spans residues 300 to 336 (LYGGLSFRGWRKNKSEIRTNAEDRARAVIREEYQNLG). Residues 337–357 (PIKFAEQAVFILFCMFAILLF) form a helical membrane-spanning segment. The Extracellular segment spans residues 358–372 (TRDPKFIPGWASLFN). Residues 373-393 (PGFLSDAVTGVAIVTILFFFP) traverse the membrane as a helical segment. Topologically, residues 394 to 422 (SQRPSLKWWFDFKAPNTETEPLLTWKKAQ) are cytoplasmic. An intramembrane region (helical) is located at residues 423 to 443 (ETVPWNIILLLGGGFAMAKGC). Topologically, residues 444–461 (EESGLSVWIGGQLHPLEN) are cytoplasmic. The chain crosses the membrane as a helical span at residues 462-482 (VPPALAVLLITVVIAFFTEFA). Topologically, residues 483–505 (SNTATIIIFLPVLAELAIRLRVH) are extracellular. Residues 506 to 526 (PLYLMIPGTVGCSFAFMLPVS) form a helical membrane-spanning segment. The Cytoplasmic segment spans residues 527–546 (TPPNSIAFASGHLLVKDMVR). Residues 547-567 (TGLLMNLMGVLLLSLAMNTWA) traverse the membrane as a helical segment. Residues 568–602 (QTIFQLGTFPDWADMYSVNVTALPPTLANDTFRTL) lie on the Extracellular side of the membrane. N-linked (GlcNAc...) asparagine glycans are attached at residues Asn-586 and Asn-596.

The protein belongs to the SLC13A/DASS transporter (TC 2.A.47) family. NADC subfamily. In terms of tissue distribution, expression is highest in kidney. Detected in placenta, brain, liver and pancreas.

It is found in the cell membrane. The enzyme catalyses succinate(out) + 3 Na(+)(out) = succinate(in) + 3 Na(+)(in). It carries out the reaction 2-oxoglutarate(out) + 3 Na(+)(out) = 2-oxoglutarate(in) + 3 Na(+)(in). The catalysed reaction is N-acetyl-L-aspartate(out) + 3 Na(+)(out) = N-acetyl-L-aspartate(in) + 3 Na(+)(in). It catalyses the reaction glutarate(out) + 3 Na(+)(out) = glutarate(in) + 3 Na(+)(in). The enzyme catalyses fumarate(out) + 3 Na(+)(out) = fumarate(in) + 3 Na(+)(in). It carries out the reaction malate(out) + 3 Na(+)(out) = malate(in) + 3 Na(+)(in). The catalysed reaction is 2,2-dimethylsuccinate(out) + 3 Na(+)(out) = 2,2-dimethylsuccinate(in) + 3 Na(+)(in). It catalyses the reaction 2,3-dimethylsuccinate(out) + 3 Na(+)(out) = 2,3-dimethylsuccinate(in) + 3 Na(+)(in). The enzyme catalyses itaconate(out) + 3 Na(+)(out) = itaconate(in) + 3 Na(+)(in). With respect to regulation, li(+) decreases succinate transport in the presence of Na(+). High-affinity sodium-dicarboxylate cotransporter that accepts a range of substrates with 4-6 carbon atoms, such as the citric acid cycle intermediates succinate and alpha-ketoglutarate (2-oxoglutarate), as well as other compounds including N-acetyl-L-aspartate. Transports the dicarboxylate into the cell with a probable stoichiometry of 3 Na(+) for 1 divalent dicarboxylate, rendering the process electrogenic. Can transport citrate in a Na(+)-dependent manner, recognizing the divalent form of citrate rather than the trivalent form which is normally found in blood. Imports itaconate in hepatocytes leading to activation of TFEB-dependent lysosomal biogenesis involved in antibacterial innate immune response. This is Na(+)/dicarboxylate cotransporter 3 (SLC13A3) from Homo sapiens (Human).